A 2144-amino-acid chain; its full sequence is Cadherin EGF LAG seven-pass G-type receptor 2 (2144 aa).

Cadherin domains follow at residues 1–40, 41–146, 147–248, and 253–371; these read EDQV…APQF, LRDS…PPVF, EQDE…PPVL, and ILFN…SPLL. At 1 to 1605 the chain is on the extracellular side; that stretch reads EDQVSYTLAI…GEILPLKTLT (1605 aa). Asn261, Asn301, Asn407, and Asn437 each carry an N-linked (GlcNAc...) asparagine glycan. An EGF-like 1; calcium-binding domain is found at 453-511; sequence DDNICLREPCENYMRCVSVLRFDSSAPFIASSSVLFRPIHPVGGLRCRCPPGFTGDYCE. Intrachain disulfides connect Cys457-Cys468, Cys462-Cys499, Cys501-Cys510, Cys517-Cys528, Cys522-Cys537, Cys539-Cys548, Cys557-Cys568, Cys562-Cys578, and Cys580-Cys590. One can recognise an EGF-like 2; calcium-binding domain in the interval 513-549; the sequence is EVDLCYSRPCGPHGHCRSREGGYTCLCRDGYTGEHCE. The EGF-like 3; calcium-binding domain maps to 553–591; the sequence is RSGRCTPGVCKNGGTCVNLLVGGFKCDCPSGDFEKPFCQ. The 205-residue stretch at 592–796 folds into the Laminin G-like 1 domain; it reads VTTRSFPARS…IANNGTVPGC (205 aa). N-linked (GlcNAc...) asparagine glycosylation is found at Asn726 and Asn790. 4 cysteine pairs are disulfide-bonded: Cys770-Cys796, Cys803-Cys814, Cys808-Cys823, and Cys825-Cys834. The EGF-like 4; calcium-binding domain occupies 799–835; sequence KKNVCDSNTCHNGGTCVNQWDAFSCECPLGFGGKSCA. Asn816 carries the (3R)-3-hydroxyasparagine modification. The region spanning 839 to 1016 is the Laminin G-like 2 domain; it reads ANPQRFLGSS…GESINVEPGC (178 aa). N-linked (GlcNAc...) asparagine glycosylation occurs at Asn966. 14 disulfides stabilise this stretch: Cys986/Cys1016, Cys1022/Cys1033, Cys1027/Cys1042, Cys1044/Cys1053, Cys1057/Cys1068, Cys1062/Cys1080, Cys1082/Cys1091, Cys1112/Cys1124, Cys1114/Cys1131, Cys1133/Cys1146, Cys1149/Cys1161, Cys1151/Cys1168, Cys1170/Cys1179, and Cys1182/Cys1194. One can recognise an EGF-like 5; calcium-binding domain in the interval 1018-1053; sequence WPDPCDSNPCPTNSYCSNDWDSYSCSCDPGYYGDNC. Asn1035 carries the (3R)-3-hydroxyasparagine modification. N-linked (GlcNAc...) asparagine glycosylation occurs at Asn1052. The 39-residue stretch at 1054-1092 folds into the EGF-like 6; calcium-binding domain; that stretch reads TNVCDLNPCEHQSACTRKPSAPHGYICECLPNYLGPYCE. Residues 1108–1147 form the EGF-like 7; calcium-binding domain; the sequence is TCGPCNCDVSKGFDPDCNKTSGECHCKENHYRPPSSPTCL. N-linked (GlcNAc...) asparagine glycosylation occurs at Asn1125. One can recognise a Laminin EGF-like domain in the interval 1149-1196; that stretch reads CDCYPTGSLSRVCDPEDGQCPCKPGVIGRQCDRCDNPFAEVTTNGCEV. Residues Asn1249, Asn1268, and Asn1286 are each glycosylated (N-linked (GlcNAc...) asparagine). The GAIN-B domain maps to 1424–1594; the sequence is ETTVILPESV…AVLMDVSRRE (171 aa). The disordered stretch occupies residues 1439–1466; it reads PMVRSAGPGEAQETEELARRQRRHPELS. Cystine bridges form between Cys1544–Cys1576 and Cys1564–Cys1578. Positions 1544–1594 are GPS; that stretch reads CVFWNHSILVSGTGGWSARGCEVVFRNESHVSCQCNHMTSFAVLMDVSRRE. 2 N-linked (GlcNAc...) asparagine glycosylation sites follow: Asn1548 and Asn1570. A helical transmembrane segment spans residues 1606 to 1626; sequence YVALGVTLAALMITFLFLTLL. Residues 1627-1641 are Cytoplasmic-facing; it reads RALRSNQHGIRRNLT. A helical membrane pass occupies residues 1642–1662; that stretch reads AALGLAQLVFLLGINQADLPF. Position 1663 (Ala1663) is a topological domain, extracellular. The helical transmembrane segment at 1664 to 1684 threads the bilayer; that stretch reads CTVIAILLHFLYLCTFSWALL. At 1685-1705 the chain is on the cytoplasmic side; sequence EALHLYRALTEVRDVNASPMR. The chain crosses the membrane as a helical span at residues 1706–1726; it reads FYYMLGWGVPAFITGLAVGLD. Residues 1727–1744 lie on the Extracellular side of the membrane; it reads PEGYGNPDFCWLSIYDTL. Residues 1745 to 1765 form a helical membrane-spanning segment; the sequence is IWSFAGPVAFAVSMSVFLYIL. Over 1766 to 1789 the chain is Cytoplasmic; sequence SARASCAAQRQGFEKKGPVSGLRS. Residues 1790-1810 traverse the membrane as a helical segment; the sequence is SFTVLLLLSATWLLALLSVNS. Residues 1811-1816 lie on the Extracellular side of the membrane; sequence DTLLFH. The chain crosses the membrane as a helical span at residues 1817–1837; sequence YLFAACNCVQGPFIFLSYVVL. Over 1838–2144 the chain is Cytoplasmic; that stretch reads SKEVRKALKF…SEFLFFNFLH (307 aa). Residues 1914–2109 are disordered; sequence TLNPGQVPPG…PPRPPPRQSL (196 aa). Positions 1943–1955 are enriched in acidic residues; it reads TDSDSDLSLEDDQ. Residues 2016–2025 are compositionally biased toward polar residues; sequence GTTTKENSGS. A compositionally biased stretch (basic and acidic residues) spans 2028 to 2040; sequence LEERPRENGDALT. The segment covering 2082–2095 has biased composition (polar residues); it reads GTGSSRGSTASEGS.

Belongs to the G-protein coupled receptor 2 family. LN-TM7 subfamily. In terms of assembly, heterodimer of 2 chains generated by proteolytic processing; the large extracellular N-terminal fragment and the membrane-bound C-terminal fragment predominantly remain associated and non-covalently linked. Post-translationally, the iron and 2-oxoglutarate dependent 3-hydroxylation of aspartate and asparagine is (R) stereospecific within EGF domains. Autoproteolytically processed at the GPS region of the GAIN-B domain; this cleavage modulates receptor activity. Expressed in the brain. High expression in cerebellum and olfactory bulb. Weaker expression in cerebral cortex, hippocampus and brain stem.

The protein localises to the cell membrane. Its function is as follows. Receptor that may have an important role in cell/cell signaling during nervous system formation. In Rattus norvegicus (Rat), this protein is Cadherin EGF LAG seven-pass G-type receptor 2.